A 153-amino-acid chain; its full sequence is Nucleoside diphosphate kinase (153 aa).

Residues lysine 13, phenylalanine 61, arginine 89, threonine 95, arginine 106, and asparagine 116 each coordinate ATP. Catalysis depends on histidine 119, which acts as the Pros-phosphohistidine intermediate.

It belongs to the NDK family. Homohexamer. Mg(2+) is required as a cofactor.

It is found in the cytoplasm. The enzyme catalyses a 2'-deoxyribonucleoside 5'-diphosphate + ATP = a 2'-deoxyribonucleoside 5'-triphosphate + ADP. It carries out the reaction a ribonucleoside 5'-diphosphate + ATP = a ribonucleoside 5'-triphosphate + ADP. Functionally, major role in the synthesis of nucleoside triphosphates other than ATP. The ATP gamma phosphate is transferred to the NDP beta phosphate via a ping-pong mechanism, using a phosphorylated active-site intermediate. This chain is Nucleoside diphosphate kinase (NDK), found in Brugia malayi (Filarial nematode worm).